Reading from the N-terminus, the 111-residue chain is Large ribosomal subunit protein uL22 (111 aa).

It belongs to the universal ribosomal protein uL22 family. As to quaternary structure, part of the 50S ribosomal subunit.

This protein binds specifically to 23S rRNA; its binding is stimulated by other ribosomal proteins, e.g. L4, L17, and L20. It is important during the early stages of 50S assembly. It makes multiple contacts with different domains of the 23S rRNA in the assembled 50S subunit and ribosome. Its function is as follows. The globular domain of the protein is located near the polypeptide exit tunnel on the outside of the subunit, while an extended beta-hairpin is found that lines the wall of the exit tunnel in the center of the 70S ribosome. The protein is Large ribosomal subunit protein uL22 of Chlamydia trachomatis serovar L2b (strain UCH-1/proctitis).